A 173-amino-acid polypeptide reads, in one-letter code: NADH-ubiquinone oxidoreductase chain 6 (173 aa).

Helical transmembrane passes span M1–S21, Y27–G47, V48–V68, V87–F107, and C139–L159.

Belongs to the complex I subunit 6 family.

Its subcellular location is the mitochondrion membrane. The catalysed reaction is a ubiquinone + NADH + 5 H(+)(in) = a ubiquinol + NAD(+) + 4 H(+)(out). Functionally, core subunit of the mitochondrial membrane respiratory chain NADH dehydrogenase (Complex I) that is believed to belong to the minimal assembly required for catalysis. Complex I functions in the transfer of electrons from NADH to the respiratory chain. The immediate electron acceptor for the enzyme is believed to be ubiquinone. This chain is NADH-ubiquinone oxidoreductase chain 6 (MT-ND6), found in Cepphus columba (Pigeon guillemot).